The sequence spans 594 residues: Sodium-dependent glucose transporter 1 (594 aa).

Transmembrane regions (helical) follow at residues 77 to 97 (WLVSLALCASFLGLGMAISVL), 115 to 137 (LSYIFVGRASGYIGGSLLGGILF), 144 to 161 (LLLGFALLTTAFGMSGTP), 166 to 186 (AWVLTVLMSSVGVSMGVLDTG), 205 to 225 (ALHFSFAAGAFASPIIAKLLF), 269 to 289 (IVIGAFVLLVSLLFFSLYFCI), 311 to 331 (TLIILLSMFFFFYVGSEVAYG), 349 to 371 (AAGLNSLFWGAFAAGRGLAIFFA), 393 to 413 (LLCLFSQNYPMLWACTALYGI), 439 to 459 (IFVVGAALGEMVLPALLGFLL), and 467 to 487 (LLMYLTLCTATFTSILFPVLY).

Belongs to the major facilitator superfamily.

It localises to the apical cell membrane. Its function is as follows. May function as a sodium-dependent glucose transporter. Potential channels for urea in the inner medulla of kidney. The protein is Sodium-dependent glucose transporter 1 (mfsd4b) of Danio rerio (Zebrafish).